Consider the following 380-residue polypeptide: O-antigen polymerase (380 aa).

12 helical membrane-spanning segments follow: residues 1–21 (MTYF…RLTP), 27–47 (NIVL…TFNE), 55–75 (ATTL…YILI), 94–114 (YIYW…IILL), 132–152 (SISG…MYLA), 169–189 (FLLA…VYIV), 201–221 (LIYG…LGKF), 229–249 (IISA…AAFN), 282–302 (ILPW…FAPW), 306–326 (LGLY…GIWF), 332–352 (LAVG…FFQE), and 353–373 (HYLL…LLAM).

It localises to the cell inner membrane. The catalysed reaction is n lipid-linked O-antigen repeat units = a lipid-linked O antigen + (n-1) polyisoprenyl diphosphate.. It participates in bacterial outer membrane biogenesis; LPS O-antigen biosynthesis. Functionally, polymerase involved in the biosynthesis of the lipopolysaccharide (LPS). Catalyzes the polymerization of the O-antigen repeat units on the periplasmic face of the inner membrane, leading to the formation of the lipid-linked O-antigen molecule. This is O-antigen polymerase from Shigella dysenteriae.